The sequence spans 139 residues: ATP synthase epsilon chain (139 aa).

It belongs to the ATPase epsilon chain family. As to quaternary structure, F-type ATPases have 2 components, CF(1) - the catalytic core - and CF(0) - the membrane proton channel. CF(1) has five subunits: alpha(3), beta(3), gamma(1), delta(1), epsilon(1). CF(0) has three main subunits: a, b and c.

The protein localises to the cell inner membrane. In terms of biological role, produces ATP from ADP in the presence of a proton gradient across the membrane. The protein is ATP synthase epsilon chain of Haemophilus ducreyi (strain 35000HP / ATCC 700724).